The following is an 809-amino-acid chain: TPR repeat-containing protein TP_0920 (809 aa).

The segment at Pro-103–Ser-125 is disordered. TPR repeat units follow at residues Leu-315–Cys-348, Ala-383–Gln-416, Leu-418–Gln-450, Thr-471–Asp-504, Leu-513–Cys-550, Leu-552–Asn-582, Gly-583–Glu-616, Gly-656–Asn-689, and Ala-723–Cys-756.

This Treponema pallidum (strain Nichols) protein is TPR repeat-containing protein TP_0920.